The chain runs to 177 residues: Probable DNA-directed RNA polymerase subunit delta (177 aa).

The region spanning 14–83 (LSMIEVARAI…GENKWGLRSW (70 aa)) is the HTH HARE-type domain. 2 stretches are compositionally biased toward acidic residues: residues 117–134 (GDDDAIDYGHDDPEDEDN) and 142–157 (EYDDENPDDEKDEVES). Residues 117–164 (GDDDAIDYGHDDPEDEDNYPGSVSSEYDDENPDDEKDEVESYDQKSTK) are disordered.

Belongs to the RpoE family. RNAP is composed of a core of 2 alpha, a beta and a beta' subunits. The core is associated with a delta subunit and one of several sigma factors.

Functionally, participates in both the initiation and recycling phases of transcription. In the presence of the delta subunit, RNAP displays an increased specificity of transcription, a decreased affinity for nucleic acids, and an increased efficiency of RNA synthesis because of enhanced recycling. This Streptococcus suis (strain 98HAH33) protein is Probable DNA-directed RNA polymerase subunit delta.